The following is a 424-amino-acid chain: STAM-binding protein (424 aa).

The tract at residues 1 to 127 (MSDHGDVSLP…YTEYNEEKKK (127 aa)) is interaction with CHMP3. Residues serine 2 and serine 48 each carry the phosphoserine modification. An interaction with STAM region spans residues 227-231 (PAKPP). Serine 243, serine 245, and serine 247 each carry phosphoserine. The MPN domain occupies 257 to 388 (VVVPGRLCPQ…LTDHGLEEIS (132 aa)). The Zn(2+) site is built by histidine 335, histidine 337, aspartate 348, histidine 350, cysteine 390, histidine 396, and histidine 398. The JAMM motif motif lies at 335-348 (HTHPTQTAFLSSVD).

It belongs to the peptidase M67C family. In terms of assembly, interacts with STAM. Interacts with SMAD6 and SMAD7. Interacts with CHMP3; the interaction appears to relieve the autoinhibition of CHMP3. Interacts with SMURF2 and RNF11; this interaction promotes ubiquitination. The cofactor is Zn(2+). In terms of processing, phosphorylated after BMP type I receptor activation. Post-translationally, ubiquitinated by SMURF2 in the presence of RNF11. Ubiquitously expressed.

It localises to the nucleus. It is found in the membrane. The protein localises to the cytoplasm. Its subcellular location is the early endosome. With respect to regulation, inhibited by N-ethylmaleimide. Strongly and specifically inhibited by ubiquitin variants UbV(SP.2) and UbV(SP.3). Also inhibited by UbV(SP.1); an ubiquitin variant that also inhibits STAMBPL1. Zinc metalloprotease that specifically cleaves 'Lys-63'-linked polyubiquitin chains. Does not cleave 'Lys-48'-linked polyubiquitin chains. Plays a role in signal transduction for cell growth and MYC induction mediated by IL-2 and GM-CSF. Potentiates BMP (bone morphogenetic protein) signaling by antagonizing the inhibitory action of SMAD6 and SMAD7. Has a key role in regulation of cell surface receptor-mediated endocytosis and ubiquitin-dependent sorting of receptors to lysosomes. Endosomal localization of STAMBP is required for efficient EGFR degradation but not for its internalization. Involved in the negative regulation of PI3K-AKT-mTOR and RAS-MAP signaling pathways. The chain is STAM-binding protein (STAMBP) from Homo sapiens (Human).